Here is a 365-residue protein sequence, read N- to C-terminus: DNA replication and repair protein RecF (365 aa).

ATP is bound at residue 30–37 (GRNAQGKT).

Belongs to the RecF family.

It is found in the cytoplasm. The RecF protein is involved in DNA metabolism; it is required for DNA replication and normal SOS inducibility. RecF binds preferentially to single-stranded, linear DNA. It also seems to bind ATP. The chain is DNA replication and repair protein RecF from Streptococcus pneumoniae (strain 70585).